We begin with the raw amino-acid sequence, 368 residues long: 4-hydroxy-3-methylbut-2-en-1-yl diphosphate synthase (flavodoxin) (368 aa).

[4Fe-4S] cluster contacts are provided by C268, C271, C303, and E310.

The protein belongs to the IspG family. [4Fe-4S] cluster serves as cofactor.

It carries out the reaction (2E)-4-hydroxy-3-methylbut-2-enyl diphosphate + oxidized [flavodoxin] + H2O + 2 H(+) = 2-C-methyl-D-erythritol 2,4-cyclic diphosphate + reduced [flavodoxin]. It functions in the pathway isoprenoid biosynthesis; isopentenyl diphosphate biosynthesis via DXP pathway; isopentenyl diphosphate from 1-deoxy-D-xylulose 5-phosphate: step 5/6. Its function is as follows. Converts 2C-methyl-D-erythritol 2,4-cyclodiphosphate (ME-2,4cPP) into 1-hydroxy-2-methyl-2-(E)-butenyl 4-diphosphate. This is 4-hydroxy-3-methylbut-2-en-1-yl diphosphate synthase (flavodoxin) from Listeria monocytogenes serotype 4b (strain F2365).